The primary structure comprises 316 residues: Transaldolase (316 aa).

Lys-131 functions as the Schiff-base intermediate with substrate in the catalytic mechanism.

This sequence belongs to the transaldolase family. Type 1 subfamily. In terms of assembly, homodimer.

The protein localises to the cytoplasm. The enzyme catalyses D-sedoheptulose 7-phosphate + D-glyceraldehyde 3-phosphate = D-erythrose 4-phosphate + beta-D-fructose 6-phosphate. It functions in the pathway carbohydrate degradation; pentose phosphate pathway; D-glyceraldehyde 3-phosphate and beta-D-fructose 6-phosphate from D-ribose 5-phosphate and D-xylulose 5-phosphate (non-oxidative stage): step 2/3. Transaldolase is important for the balance of metabolites in the pentose-phosphate pathway. This Chromohalobacter salexigens (strain ATCC BAA-138 / DSM 3043 / CIP 106854 / NCIMB 13768 / 1H11) protein is Transaldolase.